The sequence spans 436 residues: MEGDELTQNIEQWKIKRLIDNLDKARGNGTSLISLIIPPREQLPIINKMITEEYGKSSNIKSRIVRQAVQSALTSTKERLKLYNNRLPANGLILYCGEVINEEGVCEKKYTIDFQPYRAINTTLYICDNKFHTQPLKDLLVMDDKFGFIIIDGNGALFGTLQGNTREVLHKFSVDLPKKHRRGGQSALRFSRLRMESRNNYLRKVAEQSVVQFISNDKVNVAGLIIAGSAEFKNVLVQSDLFDQRLAAKVLKIVDVAYGGENGFTQAIELSADTLSNIKFIREKKVMSKFFEEVAQDTKKYCYGVEDTMRSLIMGAIEVILLFENLNFTRYVLKNPTTGAEKTLYLTPEQEENHDNFMENGEELEALEKGPLPEWIVDNYMKFGAGLEFITDRSQEGAQFVRGFGGLGAFLRYQVDMAHLNAGEEELDEEWDDDFM.

The protein belongs to the eukaryotic release factor 1 family. In terms of assembly, heterodimer of two subunits, one of which binds GTP.

It is found in the cytoplasm. Its function is as follows. Directs the termination of nascent peptide synthesis (translation) in response to the termination codons UAA and UAG. In B.musculus UGA codes for tryptophan. In Blepharisma musculus, this protein is Eukaryotic peptide chain release factor subunit 1 (eRF1).